Consider the following 392-residue polypeptide: 26S proteasome regulatory subunit 8 homolog (392 aa).

G176–T183 serves as a coordination point for ATP.

Belongs to the AAA ATPase family. In terms of assembly, the 26S proteasome consists of a 20S proteasome core and two 19S regulatory subunits. The 20S proteasome core is composed of 28 subunits that are arranged in four stacked rings, resulting in a barrel-shaped structure. The two end rings are each formed by seven alpha subunits, and the two central rings are each formed by seven beta subunits. The catalytic chamber with the active sites is on the inside of the barrel.

The protein localises to the cytoplasm. The protein resides in the nucleus. Acts as a regulatory subunit of the 26S proteasome which degrades poly-ubiquitinated proteins in the cytoplasm and in the nucleus. It is essential for the regulated turnover of proteins and for the removal of misfolded proteins. The proteasome is a multicatalytic proteinase complex that is characterized by its ability to cleave peptides with Arg, Phe, Tyr, Leu, and Glu adjacent to the leaving group at neutral or slightly basic pH. This chain is 26S proteasome regulatory subunit 8 homolog (RPT6), found in Encephalitozoon cuniculi (strain GB-M1) (Microsporidian parasite).